A 394-amino-acid polypeptide reads, in one-letter code: Elongation factor Tu 2 (394 aa).

One can recognise a tr-type G domain in the interval 10 to 204 (KPHVNVGTIG…ALDTYIPEPE (195 aa)). The segment at 19–26 (GHVDHGKT) is G1. 19-26 (GHVDHGKT) is a binding site for GTP. Thr-26 contributes to the Mg(2+) binding site. The tract at residues 60-64 (GITIS) is G2. Positions 81–84 (DCPG) are G3. GTP-binding positions include 81–85 (DCPGH) and 136–139 (NKCD). The segment at 136–139 (NKCD) is G4. The tract at residues 174–176 (SAL) is G5.

Belongs to the TRAFAC class translation factor GTPase superfamily. Classic translation factor GTPase family. EF-Tu/EF-1A subfamily. Monomer.

It is found in the cytoplasm. It carries out the reaction GTP + H2O = GDP + phosphate + H(+). Its function is as follows. GTP hydrolase that promotes the GTP-dependent binding of aminoacyl-tRNA to the A-site of ribosomes during protein biosynthesis. The sequence is that of Elongation factor Tu 2 from Vibrio vulnificus (strain CMCP6).